Consider the following 382-residue polypeptide: MIOREX complex component 5 (382 aa).

A mitochondrion-targeting transit peptide spans 1–12 (MRRTFSQLATRL).

In terms of assembly, associates with the mitochondrial ribosome.

It localises to the mitochondrion. In terms of biological role, component of MIOREX complexes, large expressome-like assemblies of ribosomes with factors involved in all the steps of post-transcriptional gene expression. The protein is MIOREX complex component 5 of Saccharomyces cerevisiae (strain ATCC 204508 / S288c) (Baker's yeast).